The primary structure comprises 213 residues: FMN-dependent NADH:quinone oxidoreductase (213 aa).

The protein belongs to the azoreductase type 1 family. As to quaternary structure, homodimer. It depends on FMN as a cofactor.

It carries out the reaction 2 a quinone + NADH + H(+) = 2 a 1,4-benzosemiquinone + NAD(+). The enzyme catalyses N,N-dimethyl-1,4-phenylenediamine + anthranilate + 2 NAD(+) = 2-(4-dimethylaminophenyl)diazenylbenzoate + 2 NADH + 2 H(+). Quinone reductase that provides resistance to thiol-specific stress caused by electrophilic quinones. Its function is as follows. Also exhibits azoreductase activity. Catalyzes the reductive cleavage of the azo bond in aromatic azo compounds to the corresponding amines. In Streptococcus agalactiae serotype III (strain NEM316), this protein is FMN-dependent NADH:quinone oxidoreductase.